The following is a 795-amino-acid chain: Phenylalanine--tRNA ligase beta subunit (795 aa).

One can recognise a tRNA-binding domain in the interval 39–148 (KSEFHGVVVG…KETLVGINVY (110 aa)). A B5 domain is found at 400–475 (HKNNTIRLHH…RIYEYNNVHL (76 aa)). Residues aspartate 453, aspartate 459, and aspartate 463 each coordinate Mg(2+). The 94-residue stretch at 701 to 794 (SKFPTVRRDI…LQKKFQAVLR (94 aa)) folds into the FDX-ACB domain.

Belongs to the phenylalanyl-tRNA synthetase beta subunit family. Type 1 subfamily. As to quaternary structure, tetramer of two alpha and two beta subunits. Requires Mg(2+) as cofactor.

The protein localises to the cytoplasm. It catalyses the reaction tRNA(Phe) + L-phenylalanine + ATP = L-phenylalanyl-tRNA(Phe) + AMP + diphosphate + H(+). The polypeptide is Phenylalanine--tRNA ligase beta subunit (pheT) (Buchnera aphidicola subsp. Acyrthosiphon pisum (strain APS) (Acyrthosiphon pisum symbiotic bacterium)).